The primary structure comprises 197 residues: Elongation factor Ts (197 aa).

Positions 81–84 (TDFV) are involved in Mg(2+) ion dislocation from EF-Tu.

This sequence belongs to the EF-Ts family.

The protein localises to the cytoplasm. Functionally, associates with the EF-Tu.GDP complex and induces the exchange of GDP to GTP. It remains bound to the aminoacyl-tRNA.EF-Tu.GTP complex up to the GTP hydrolysis stage on the ribosome. This Sulfurihydrogenibium sp. (strain YO3AOP1) protein is Elongation factor Ts.